The chain runs to 30 residues: 2S seed storage-like protein (30 aa).

Belongs to the 2S seed storage albumins family. The mature protein is a heterodimer of a small and a large chain linked by 2 disulfide bonds. Extracted from castor bean.

In terms of biological role, this is a 2S seed storage protein. Inhibits spore germination in R.solani and F.oxysporum. Exhibits anti-trypsin activity. This is 2S seed storage-like protein from Ricinus communis (Castor bean).